A 215-amino-acid chain; its full sequence is 3-isopropylmalate dehydratase small subunit (215 aa).

This sequence belongs to the LeuD family. LeuD type 1 subfamily. In terms of assembly, heterodimer of LeuC and LeuD.

The catalysed reaction is (2R,3S)-3-isopropylmalate = (2S)-2-isopropylmalate. The protein operates within amino-acid biosynthesis; L-leucine biosynthesis; L-leucine from 3-methyl-2-oxobutanoate: step 2/4. Catalyzes the isomerization between 2-isopropylmalate and 3-isopropylmalate, via the formation of 2-isopropylmaleate. In Xanthomonas euvesicatoria pv. vesicatoria (strain 85-10) (Xanthomonas campestris pv. vesicatoria), this protein is 3-isopropylmalate dehydratase small subunit.